Consider the following 130-residue polypeptide: Gonadotropin subunit beta-1 (130 aa).

The signal sequence occupies residues 1 to 18 (MRMHFVVMVMLLPALMMA). Intrachain disulfides connect Cys-26–Cys-74, Cys-40–Cys-89, Cys-51–Cys-105, Cys-55–Cys-107, and Cys-110–Cys-117. An N-linked (GlcNAc...) asparagine glycan is attached at Asn-30.

Belongs to the glycoprotein hormones subunit beta family. Heterodimer of an alpha and a beta chain.

Its subcellular location is the secreted. Involved in gametogenesis and steroidogenesis. This chain is Gonadotropin subunit beta-1 (cgba), found in Cyprinus carpio (Common carp).